An 85-amino-acid chain; its full sequence is ATP synthase subunit c (85 aa).

2 helical membrane-spanning segments follow: residues 10–30 (GLAL…GAIG) and 65–85 (AVAE…LLVV).

The protein belongs to the ATPase C chain family. F-type ATPases have 2 components, F(1) - the catalytic core - and F(0) - the membrane proton channel. F(1) has five subunits: alpha(3), beta(3), gamma(1), delta(1), epsilon(1). F(0) has three main subunits: a(1), b(2) and c(10-14). The alpha and beta chains form an alternating ring which encloses part of the gamma chain. F(1) is attached to F(0) by a central stalk formed by the gamma and epsilon chains, while a peripheral stalk is formed by the delta and b chains.

It is found in the cell inner membrane. Functionally, f(1)F(0) ATP synthase produces ATP from ADP in the presence of a proton or sodium gradient. F-type ATPases consist of two structural domains, F(1) containing the extramembraneous catalytic core and F(0) containing the membrane proton channel, linked together by a central stalk and a peripheral stalk. During catalysis, ATP synthesis in the catalytic domain of F(1) is coupled via a rotary mechanism of the central stalk subunits to proton translocation. In terms of biological role, key component of the F(0) channel; it plays a direct role in translocation across the membrane. A homomeric c-ring of between 10-14 subunits forms the central stalk rotor element with the F(1) delta and epsilon subunits. The chain is ATP synthase subunit c from Thermotoga maritima (strain ATCC 43589 / DSM 3109 / JCM 10099 / NBRC 100826 / MSB8).